A 501-amino-acid polypeptide reads, in one-letter code: Armadillo repeat-containing protein 6 (501 aa).

Ser64 is modified (phosphoserine). ARM repeat units follow at residues 220–264, 274–318, 319–369, and 370–412; these read GVLP…HAHN, KGLK…DLGG, LSIL…RAGG, and TESI…VEGG. His263 is subject to Pros-methylhistidine.

Belongs to the ARMC6 family. Post-translationally, methylated at His-263 by METTL9.

This chain is Armadillo repeat-containing protein 6 (ARMC6), found in Homo sapiens (Human).